The following is a 231-amino-acid chain: Ribonuclease P protein component 3 (231 aa).

The protein belongs to the eukaryotic/archaeal RNase P protein component 3 family. As to quaternary structure, consists of a catalytic RNA component and at least 4-5 protein subunits.

It is found in the cytoplasm. The enzyme catalyses Endonucleolytic cleavage of RNA, removing 5'-extranucleotides from tRNA precursor.. Part of ribonuclease P, a protein complex that generates mature tRNA molecules by cleaving their 5'-ends. This chain is Ribonuclease P protein component 3, found in Methanococcus maripaludis (strain C5 / ATCC BAA-1333).